Reading from the N-terminus, the 186-residue chain is MVAARAAAWLLLAAAACAPREQDFYDFKAVNIRGKLVSLEKYRGSVSLVVNVASECGFTDQHYRALQQLQRDLGPHHFNVLAFPCNQFGQQEPDSNKEIESFARRTYSVSFPMFSKIAVTGTGAHPAFKYLTETSGKEPTWNFWKYLVAPDGKVIGAWDPTVSVEEIRPQITALVRKLILKKREDL.

An N-terminal signal peptide occupies residues methionine 1–alanine 18. Cysteine 56 is an active-site residue.

Belongs to the glutathione peroxidase family.

It is found in the secreted. The catalysed reaction is 2 glutathione + H2O2 = glutathione disulfide + 2 H2O. In Bos taurus (Bovine), this protein is Glutathione peroxidase 7 (GPX7).